A 222-amino-acid chain; its full sequence is Octanoyltransferase (222 aa).

A BPL/LPL catalytic domain is found at 34–214 (GEKNSTVLIL…EFSKHDEALV (181 aa)). Residues 72–79 (RGGKLTWH), 144–146 (AIG), and 157–159 (GVA) each bind substrate. Catalysis depends on Cys-175, which acts as the Acyl-thioester intermediate.

It belongs to the LipB family.

The protein localises to the cytoplasm. It carries out the reaction octanoyl-[ACP] + L-lysyl-[protein] = N(6)-octanoyl-L-lysyl-[protein] + holo-[ACP] + H(+). The protein operates within protein modification; protein lipoylation via endogenous pathway; protein N(6)-(lipoyl)lysine from octanoyl-[acyl-carrier-protein]: step 1/2. In terms of biological role, catalyzes the transfer of endogenously produced octanoic acid from octanoyl-acyl-carrier-protein onto the lipoyl domains of lipoate-dependent enzymes. Lipoyl-ACP can also act as a substrate although octanoyl-ACP is likely to be the physiological substrate. This Paenarthrobacter aurescens (strain TC1) protein is Octanoyltransferase.